The chain runs to 146 residues: MKEIIIYTDGACSGNPGPGGWGAVLAYGEHQKEIAGAEADTTNQRMELMAVIEALKAIKGSGWEIRVYSDSAYFINAIQKGWLENWQRNGWKNSKKEDVANQDLWKALIPLLRKNRVRVEKVKGHSGDRWNERCDQLARNAIKSLG.

The region spanning 1 to 143 (MKEIIIYTDG…CDQLARNAIK (143 aa)) is the RNase H type-1 domain. Positions 9, 47, 70, and 135 each coordinate Mg(2+).

It belongs to the RNase H family. In terms of assembly, monomer. Mg(2+) serves as cofactor.

The protein localises to the cytoplasm. It catalyses the reaction Endonucleolytic cleavage to 5'-phosphomonoester.. Functionally, endonuclease that specifically degrades the RNA of RNA-DNA hybrids. The sequence is that of Ribonuclease H from Syntrophomonas wolfei subsp. wolfei (strain DSM 2245B / Goettingen).